The following is a 270-amino-acid chain: Diaminopimelate epimerase (270 aa).

The substrate site is built by Asn-15, Gln-49, and Asn-66. The Proton donor role is filled by Cys-75. Residues 76–77 (GN), Asn-155, Asn-187, and 204–205 (ER) each bind substrate. The active-site Proton acceptor is Cys-213. Substrate is bound at residue 214–215 (GS).

Belongs to the diaminopimelate epimerase family. Homodimer.

The protein resides in the cytoplasm. The catalysed reaction is (2S,6S)-2,6-diaminopimelate = meso-2,6-diaminopimelate. The protein operates within amino-acid biosynthesis; L-lysine biosynthesis via DAP pathway; DL-2,6-diaminopimelate from LL-2,6-diaminopimelate: step 1/1. In terms of biological role, catalyzes the stereoinversion of LL-2,6-diaminopimelate (L,L-DAP) to meso-diaminopimelate (meso-DAP), a precursor of L-lysine and an essential component of the bacterial peptidoglycan. The sequence is that of Diaminopimelate epimerase from Rickettsia africae (strain ESF-5).